Here is a 231-residue protein sequence, read N- to C-terminus: Somatolactin (231 aa).

An N-terminal signal peptide occupies residues 1–24; sequence MNMMTVKQQGVWAALLWPYLLTAS. 3 disulfides stabilise this stretch: Cys-29/Cys-39, Cys-89/Cys-205, and Cys-222/Cys-230. N-linked (GlcNAc...) asparagine glycosylation occurs at Asn-145.

This sequence belongs to the somatotropin/prolactin family. As to expression, pituitary gland.

Its subcellular location is the secreted. This is Somatolactin from Paralichthys olivaceus (Bastard halibut).